Here is a 232-residue protein sequence, read N- to C-terminus: 7-cyano-7-deazaguanine synthase (232 aa).

8–18 lines the ATP pocket; that stretch reads FSGGQDSTTCL. Zn(2+)-binding residues include Cys-189, Cys-198, Cys-201, and Cys-204.

Belongs to the QueC family. Requires Zn(2+) as cofactor.

It catalyses the reaction 7-carboxy-7-deazaguanine + NH4(+) + ATP = 7-cyano-7-deazaguanine + ADP + phosphate + H2O + H(+). Its pathway is purine metabolism; 7-cyano-7-deazaguanine biosynthesis. Its function is as follows. Catalyzes the ATP-dependent conversion of 7-carboxy-7-deazaguanine (CDG) to 7-cyano-7-deazaguanine (preQ(0)). The protein is 7-cyano-7-deazaguanine synthase of Proteus mirabilis (strain HI4320).